A 184-amino-acid chain; its full sequence is Large ribosomal subunit protein bL17 (184 aa).

Positions 126 to 184 (TRAARAAASKQTADEAQVEETPAEEVTEETAAEETTEAAQADEAPAEEAPVEEKKDEEK) are disordered. The segment covering 141 to 161 (AQVEETPAEEVTEETAAEETT) has biased composition (acidic residues).

It belongs to the bacterial ribosomal protein bL17 family. As to quaternary structure, part of the 50S ribosomal subunit. Contacts protein L32.

The protein is Large ribosomal subunit protein bL17 of Corynebacterium efficiens (strain DSM 44549 / YS-314 / AJ 12310 / JCM 11189 / NBRC 100395).